The sequence spans 780 residues: MESIMKVAMDKAAEQLIQQFGFDYLQQQLQLQHQNQHNSSPQQPQHQQLEPENEHLTYQYQQSKPTHMQQLACNYQPRHSTTTSSPSSTHSLASGGGSSSNSSNSSSSDSSSINISHISNISNISNIGNISNSNHSNAAYSLAVHSYQKQIESPANPSHVPHHQMDLSPLSENGSPNGTPGAQTPTATASGNTAAALASAAAAAAAATSGGNGSSITNCNSNNSSSSSNAQQQLQLGNYKTNSCWCYGESVCSGIEVEIENNNNNHIHHGETTYHMKILVPAVASGAIIGKGGETIASLQKDTGARVKMSKSHDFYPGTTERVCLITGSTEAIMVVMEFIMDKIREKPDLTNKIVDTDSKQTQERDKQVKILVPNSTAGMIIGKGGAFIKQIKEESGSYVQISQKPTDVSLQERCITIIGDKENNKNACKMILSKIVEDPQSGTCLNVSYADVSGPVANFNPTGSPYATNQNAINSSTASLNSTLGTTIGGANSAASLLVNGTGINLSINLGSPNPAPNLAVATQLLEHIKVAMRGSGYSETVTNEVVAALSVLAKYGVLGMGVGVSHTNGAHSTLGNFLGVTTLDQQTAAAASAATASNVFGAVGQVNLEQYAAAVASAAAASRPTQSQLDAAAVQFDPFRHLGSATAPAATPVSLNNNSFGLTATTGTATTAQLGGLSKSPTPGDLSSKDSKNVEVPEVIIGAILGPSGRSLVEIQHVSGANVQISKKGIFAPGTRNRIVTITGQPSAIAKAQYLIEQKINEEETKRARQIPLTTVVN.

Disordered stretches follow at residues 31–50, 76–113, and 150–190; these read LQHQ…QQLE, QPRH…SSSI, and QIES…ATAS. Composition is skewed to low complexity over residues 79-91, 99-113, and 176-190; these read HSTT…STHS, SSNS…SSSI, and PNGT…ATAS. KH domains follow at residues 273–340, 366–432, and 691–758; these read TYHM…MEFI, DKQV…CKMI, and KDSK…QYLI. The interval 674-693 is disordered; that stretch reads AQLGGLSKSPTPGDLSSKDS. The interval 686 to 776 is required for RNA binding; that stretch reads GDLSSKDSKN…TKRARQIPLT (91 aa).

In terms of tissue distribution, expressed in the central nervous system in mushroom body neurons (at protein level).

The protein resides in the nucleus. Its subcellular location is the cytoplasm. Functions to regulate alternative splicing in neurons by binding pre-mRNA in a sequence-specific manner to activate exon inclusion. Plays a role in long-term memory formation by processing the unspliced Orb2-isoform A (Orb2A) mRNA and thereby controlling Orb2A protein abundance. This is RNA-binding protein Pasilla from Drosophila melanogaster (Fruit fly).